The primary structure comprises 787 residues: Alpha-glucosidase 2 (787 aa).

Active-site residues include Asp407 and Glu410. Catalysis depends on Asp484, which acts as the Proton donor.

This sequence belongs to the glycosyl hydrolase 31 family. Homohexamer.

The catalysed reaction is Hydrolysis of terminal, non-reducing (1-&gt;4)-linked alpha-D-glucose residues with release of alpha-D-glucose.. The sequence is that of Alpha-glucosidase 2 from Bacillus thermoamyloliquefaciens.